Consider the following 58-residue polypeptide: Small ribosomal subunit protein bS21 (58 aa).

The segment at Arg35–Lys58 is disordered. Residues Val43 to Lys58 show a composition bias toward basic residues.

It belongs to the bacterial ribosomal protein bS21 family.

The chain is Small ribosomal subunit protein bS21 from Clostridium botulinum (strain Alaska E43 / Type E3).